Reading from the N-terminus, the 55-residue chain is Large ribosomal subunit protein bL33 (55 aa).

The protein belongs to the bacterial ribosomal protein bL33 family.

The polypeptide is Large ribosomal subunit protein bL33 (Sinorhizobium fredii (strain NBRC 101917 / NGR234)).